We begin with the raw amino-acid sequence, 148 residues long: MTDIPDRKEAVISLWPEFAKAIVSGKKTVEFRRRIPLPALSARIWIYATRPVKSVIGFAYLEAIVQGDVNTLWSRYGREAFLSEQQYRDYFEGTEKATAFLLRDHQPIRPINLDQLKEIRANFQPPQSLTWLRKEETQKLVSLTSQVE.

Residues 13–70 enclose the ASCH domain; it reads SLWPEFAKAIVSGKKTVEFRRRIPLPALSARIWIYATRPVKSVIGFAYLEAIVQGDVN.

Mn(2+) serves as cofactor. The cofactor is Ni(2+).

In terms of biological role, shows sequence-specific endoribonuclease activity towards single-stranded RNA (ssRNA), with a preference for the bond between pyrimidine and adenine nucleotides. May also have 5'-exonuclease activity. In Zymomonas mobilis subsp. mobilis (strain ATCC 10988 / DSM 424 / LMG 404 / NCIMB 8938 / NRRL B-806 / ZM1), this protein is ASCH domain-containing ribonuclease.